A 466-amino-acid polypeptide reads, in one-letter code: Phosphomethylpyrimidine synthase (466 aa).

Residues N80, M109, Y139, H175, 195–197 (SRG), 236–239 (DSLR), and E275 contribute to the substrate site. H279 provides a ligand contact to Zn(2+). Y302 is a substrate binding site. H343 is a Zn(2+) binding site. C423, C426, and C431 together coordinate [4Fe-4S] cluster.

It belongs to the ThiC family. The cofactor is [4Fe-4S] cluster.

It carries out the reaction 5-amino-1-(5-phospho-beta-D-ribosyl)imidazole + S-adenosyl-L-methionine = 4-amino-2-methyl-5-(phosphooxymethyl)pyrimidine + CO + 5'-deoxyadenosine + formate + L-methionine + 3 H(+). Its pathway is cofactor biosynthesis; thiamine diphosphate biosynthesis. Catalyzes the synthesis of the hydroxymethylpyrimidine phosphate (HMP-P) moiety of thiamine from aminoimidazole ribotide (AIR) in a radical S-adenosyl-L-methionine (SAM)-dependent reaction. The sequence is that of Phosphomethylpyrimidine synthase from Prochlorococcus marinus (strain NATL2A).